Here is a 620-residue protein sequence, read N- to C-terminus: Chaperone protein HscA homolog (620 aa).

The protein belongs to the heat shock protein 70 family.

In terms of biological role, chaperone involved in the maturation of iron-sulfur cluster-containing proteins. Has a low intrinsic ATPase activity which is markedly stimulated by HscB. The protein is Chaperone protein HscA homolog of Shewanella baltica (strain OS195).